The primary structure comprises 321 residues: Cytochrome f (321 aa).

The signal sequence occupies residues 1-37 (MKIYRQIKQSFSITKIVFSFFISLLLNLVAQPTICQA). Heme contacts are provided by Phe38, Cys58, Cys61, and His62. A helical membrane pass occupies residues 287–306 (VQGLIAFFISVVLAQIFLVL).

Belongs to the cytochrome f family. The 4 large subunits of the cytochrome b6-f complex are cytochrome b6, subunit IV (17 kDa polypeptide, petD), cytochrome f and the Rieske protein, while the 4 small subunits are PetG, PetL, PetM and PetN. The complex functions as a dimer. The cofactor is heme.

It localises to the plastid. The protein localises to the cyanelle thylakoid membrane. In terms of biological role, component of the cytochrome b6-f complex, which mediates electron transfer between photosystem II (PSII) and photosystem I (PSI), cyclic electron flow around PSI, and state transitions. The polypeptide is Cytochrome f (petA) (Cyanophora paradoxa).